Here is a 213-residue protein sequence, read N- to C-terminus: Ribosomal RNA small subunit methyltransferase G (213 aa).

S-adenosyl-L-methionine-binding positions include Gly72, Phe77, 125-126, and Arg141; that span reads IE.

The protein belongs to the methyltransferase superfamily. RNA methyltransferase RsmG family.

Its subcellular location is the cytoplasm. It carries out the reaction guanosine(527) in 16S rRNA + S-adenosyl-L-methionine = N(7)-methylguanosine(527) in 16S rRNA + S-adenosyl-L-homocysteine. Functionally, specifically methylates the N7 position of guanine in position 527 of 16S rRNA. The polypeptide is Ribosomal RNA small subunit methyltransferase G (Sinorhizobium medicae (strain WSM419) (Ensifer medicae)).